We begin with the raw amino-acid sequence, 218 residues long: Thiopurine S-methyltransferase (218 aa).

Positions 10, 45, 66, and 123 each coordinate S-adenosyl-L-methionine.

Belongs to the class I-like SAM-binding methyltransferase superfamily. TPMT family.

Its subcellular location is the cytoplasm. The catalysed reaction is S-adenosyl-L-methionine + a thiopurine = S-adenosyl-L-homocysteine + a thiopurine S-methylether.. The sequence is that of Thiopurine S-methyltransferase from Shewanella denitrificans (strain OS217 / ATCC BAA-1090 / DSM 15013).